Here is an 874-residue protein sequence, read N- to C-terminus: MKSAEIREAFLRFFEEQGHTRVASSSLIPNNDPTLLFTNAGMNQFKDCFLGAEKRAYTRAVSSQKCVRAGGKHNDLENVGYTARHHTFFEMLGNFSFGDYFKRDAITFAWTFLTSEQWLNLPKEKLWVTVYATDDEAYDIWTKEVGVPAERMVRIGDNKGAPYASDNFWTMGDTGPCGPCTEIFYDHGPDIWGGPPGSPEEDGDRYIEIWNNVFMQFNRTADGVLHPLPAPSVDTGMGLERVSAVLQHVHSNYEIDLFQNLLAAAAKAIGCSNDGQASLKVVADHIRSCGFLIADGVLPSNEGRGYVLRRIIRRACRHGNKLGAKGSFFYQIVAALAAEMGEAFPELKSQQAHIERVLKAEEEQFAKTLEQGLRILEQDLAQLKGDVVPGDVVFKLYDTYGFPMDLTADIARERELTIDEAGFEREMDAQRERARSASAFGMDYNSLVKVDSATEFLGYDTTEGQGKIIALYKDGQSVDQLGEGEQGVVVLDRTPFYAESGGQVGDSGFLQAGAARFDVRDTTKTGGAFLHHGVVASGALLIGSPVEAKVDADVQHATSLNHSATHLLHEALRQVLGEHVQQKGSLVDSQRLRFDFSHFEAVKPEQIKQLEDIVNREIRKNTPVETELTDIETAKAKGAMALFGEKYGDTVRVLSMGGDFSVELCGGIHAKRTGDISLFKIISEGGVASGVRRIEAVTGAAALAYLNAAEEQVKEAAQLVKGNRDNLIDKLSAVLERNRQLEKQLEQLQAKAASAAGDDLSNAAVEVKGAKVLAARLDGQDGKALLALVDQLKNKLGHAVILLGSEHEGKVVLVAGVTKDLSSQLKAGDLMKQAAAAVGGKGGGRPDMAQGGGVDVAALDQALALAVPFAEQGL.

Zn(2+) is bound by residues H562, H566, C665, and H669.

The protein belongs to the class-II aminoacyl-tRNA synthetase family. It depends on Zn(2+) as a cofactor.

It is found in the cytoplasm. It carries out the reaction tRNA(Ala) + L-alanine + ATP = L-alanyl-tRNA(Ala) + AMP + diphosphate. Its function is as follows. Catalyzes the attachment of alanine to tRNA(Ala) in a two-step reaction: alanine is first activated by ATP to form Ala-AMP and then transferred to the acceptor end of tRNA(Ala). Also edits incorrectly charged Ser-tRNA(Ala) and Gly-tRNA(Ala) via its editing domain. The protein is Alanine--tRNA ligase of Pseudomonas putida (strain ATCC 700007 / DSM 6899 / JCM 31910 / BCRC 17059 / LMG 24140 / F1).